Reading from the N-terminus, the 238-residue chain is Ribonuclease 3 (238 aa).

In terms of domain architecture, RNase III spans arginine 11–glycine 136. Residue glutamate 49 participates in Mg(2+) binding. Aspartate 53 is an active-site residue. The Mg(2+) site is built by aspartate 122 and glutamate 125. Glutamate 125 is a catalytic residue. Residues aspartate 161–valine 230 form the DRBM domain.

It belongs to the ribonuclease III family. As to quaternary structure, homodimer. It depends on Mg(2+) as a cofactor.

It localises to the cytoplasm. It catalyses the reaction Endonucleolytic cleavage to 5'-phosphomonoester.. Digests double-stranded RNA. Involved in the processing of primary rRNA transcript to yield the immediate precursors to the large and small rRNAs (23S and 16S). Processes some mRNAs, and tRNAs when they are encoded in the rRNA operon. Processes pre-crRNA and tracrRNA of type II CRISPR loci if present in the organism. This chain is Ribonuclease 3, found in Rhizobium meliloti (strain 1021) (Ensifer meliloti).